A 188-amino-acid chain; its full sequence is Peptidyl-tRNA hydrolase (188 aa).

F15 serves as a coordination point for tRNA. H20 serves as the catalytic Proton acceptor. TRNA contacts are provided by Y64, N66, and N112.

It belongs to the PTH family. In terms of assembly, monomer.

Its subcellular location is the cytoplasm. The catalysed reaction is an N-acyl-L-alpha-aminoacyl-tRNA + H2O = an N-acyl-L-amino acid + a tRNA + H(+). In terms of biological role, hydrolyzes ribosome-free peptidyl-tRNAs (with 1 or more amino acids incorporated), which drop off the ribosome during protein synthesis, or as a result of ribosome stalling. Its function is as follows. Catalyzes the release of premature peptidyl moieties from peptidyl-tRNA molecules trapped in stalled 50S ribosomal subunits, and thus maintains levels of free tRNAs and 50S ribosomes. This Borreliella afzelii (strain PKo) (Borrelia afzelii) protein is Peptidyl-tRNA hydrolase.